The sequence spans 122 residues: Large ribosomal subunit protein bL12 (122 aa).

This sequence belongs to the bacterial ribosomal protein bL12 family. In terms of assembly, homodimer. Part of the ribosomal stalk of the 50S ribosomal subunit. Forms a multimeric L10(L12)X complex, where L10 forms an elongated spine to which 2 to 4 L12 dimers bind in a sequential fashion. Binds GTP-bound translation factors.

Forms part of the ribosomal stalk which helps the ribosome interact with GTP-bound translation factors. Is thus essential for accurate translation. In Bdellovibrio bacteriovorus (strain ATCC 15356 / DSM 50701 / NCIMB 9529 / HD100), this protein is Large ribosomal subunit protein bL12.